A 267-amino-acid polypeptide reads, in one-letter code: Ribosomal RNA small subunit methyltransferase A (267 aa).

6 residues coordinate S-adenosyl-L-methionine: asparagine 13, leucine 15, glycine 39, glutamate 59, aspartate 87, and asparagine 106.

This sequence belongs to the class I-like SAM-binding methyltransferase superfamily. rRNA adenine N(6)-methyltransferase family. RsmA subfamily.

The protein resides in the cytoplasm. It carries out the reaction adenosine(1518)/adenosine(1519) in 16S rRNA + 4 S-adenosyl-L-methionine = N(6)-dimethyladenosine(1518)/N(6)-dimethyladenosine(1519) in 16S rRNA + 4 S-adenosyl-L-homocysteine + 4 H(+). Specifically dimethylates two adjacent adenosines (A1518 and A1519) in the loop of a conserved hairpin near the 3'-end of 16S rRNA in the 30S particle. May play a critical role in biogenesis of 30S subunits. This is Ribosomal RNA small subunit methyltransferase A from Sulfurimonas denitrificans (strain ATCC 33889 / DSM 1251) (Thiomicrospira denitrificans (strain ATCC 33889 / DSM 1251)).